The primary structure comprises 139 residues: uncharacterized protein (139 aa).

The segment covering 1–11 (MALSMSLSSDI) has biased composition (polar residues). Disordered regions lie at residues 1 to 80 (MALS…AAAA) and 100 to 139 (ASSP…LARS). Positions 63 to 80 (GAGSASAGGSRLAAAAAA) are enriched in low complexity.

This is an uncharacterized protein from Homo sapiens (Human).